A 501-amino-acid polypeptide reads, in one-letter code: Glycerol kinase (501 aa).

Thr14 lines the ADP pocket. Residues Thr14, Thr15, and Ser16 each contribute to the ATP site. Thr14 is a binding site for sn-glycerol 3-phosphate. Arg18 contacts ADP. Sn-glycerol 3-phosphate is bound by residues Arg84, Glu85, Tyr135, and Asp244. The glycerol site is built by Arg84, Glu85, Tyr135, Asp244, and Gln245. ADP-binding residues include Thr266 and Gly309. Positions 266, 309, 313, and 410 each coordinate ATP. ADP is bound by residues Gly410 and Asn414.

This sequence belongs to the FGGY kinase family.

It catalyses the reaction glycerol + ATP = sn-glycerol 3-phosphate + ADP + H(+). The protein operates within polyol metabolism; glycerol degradation via glycerol kinase pathway; sn-glycerol 3-phosphate from glycerol: step 1/1. With respect to regulation, inhibited by fructose 1,6-bisphosphate (FBP). Its function is as follows. Key enzyme in the regulation of glycerol uptake and metabolism. Catalyzes the phosphorylation of glycerol to yield sn-glycerol 3-phosphate. In Deinococcus radiodurans (strain ATCC 13939 / DSM 20539 / JCM 16871 / CCUG 27074 / LMG 4051 / NBRC 15346 / NCIMB 9279 / VKM B-1422 / R1), this protein is Glycerol kinase.